Consider the following 312-residue polypeptide: Phosphate system positive regulatory protein PHO4 (312 aa).

The interval 1 to 31 is interaction with PHO80; sequence MGRTTSEGIHGFVDDLEPKSSILDKVGDFIT. Residues 35-71 form a disordered region; the sequence is KRHDGREDFNEQNDELNSQENHNSSENGNENENEQDS. Over residues 49–62 the composition is skewed to low complexity; it reads ELNSQENHNSSENG. The 9aaTAD motif lies at 75-83; the sequence is DDLDRAFEL. Positions 75 to 99 are transcription activation domain; that stretch reads DDLDRAFELVEGMDMDWMMPSHAHH. A phosphoserine; by PHO85 mark is found at Ser-100, Ser-114, Ser-128, and Ser-152. Composition is skewed to polar residues over residues 138-154 and 196-210; these read TTSANKVTKNKSNSSPY and PSNSTRRVSPVTAKT. The segment at 138 to 259 is disordered; sequence TTSANKVTKN…DKRESHKHAE (122 aa). Positions 140 to 166 match the Nuclear localization signal motif; sequence SANKVTKNKSNSSPYLNKRRGKPGPDS. The interaction with PHO80 stretch occupies residues 156–200; that stretch reads NKRRGKPGPDSATSLFELPDSVIPTPKPKPKPKQYPKVILPSNST. The tract at residues 201–218 is interaction with PHO2; that stretch reads RRVSPVTAKTSSSAEGVV. The tract at residues 203-227 is involved in oligomerization; that stretch reads VSPVTAKTSSSAEGVVVASESPVIA. Ser-204 carries the post-translational modification Phosphoserine. The segment covering 211–235 has biased composition (low complexity); sequence SSSAEGVVVASESPVIAPHGSSHSR. Ser-223 bears the Phosphoserine; by PHO85 mark. Phosphoserine occurs at positions 242 and 243. Residues 248–259 are compositionally biased toward basic and acidic residues; that stretch reads DDDKRESHKHAE. The bHLH domain occupies 250-306; sequence DKRESHKHAEQARRNRLAVALHELASLIPAEWKQQNVSAAPSKATTVEAACRYIRHL.

In terms of assembly, binds DNA as a homodimer. Interacts with transcription factor PHO2 and binds cooperatively to PHO5 UAS. Interacts with the cyclin-CDK PHO80-PHO85 and the CDK inhibitor (CKI) PHO81. Phosphorylated by the cyclin-CDK PHO80-PHO85 at five residues under high-phosphate conditions, preventing PHO4 from activating the structural PHO genes. Phosphorylation of Ser-114 and Ser-128 promotes nuclear export. Phosphorylation of Ser-152 decreases nuclear import. Phosphorylation of Ser-223 decreases the binding affinity for PHO2.

The protein resides in the cytoplasm. The protein localises to the nucleus. Transcriptional activator that regulates the expression of repressible phosphatase under phosphate starvation conditions. Binds to the upstream activating sequence (UAS) of several phosphatase encoding PHO genes. Inhibited by the cyclin-CDK PHO80-PHO85 under high-phosphate conditions. The sequence is that of Phosphate system positive regulatory protein PHO4 (PHO4) from Saccharomyces cerevisiae (strain ATCC 204508 / S288c) (Baker's yeast).